The following is a 111-amino-acid chain: MAKHHPDLIFCRKQPGVAIGRLCEKDDGKCVICDSYVRPCTLVRICDECNYGSYQGRCVICGGPGVSDAYYCKSCTIQEKDRDGCPKIVNLGSSKTDLFYERKKYGFKQNY.

The protein belongs to the PHF5 family.

This chain is PHD finger-like domain-containing protein 5A, found in Drosophila melanogaster (Fruit fly).